We begin with the raw amino-acid sequence, 217 residues long: 3-demethoxyubiquinol 3-hydroxylase (217 aa).

6 residues coordinate Fe cation: E66, E96, H99, E148, E180, and H183.

Belongs to the COQ7 family. Fe cation is required as a cofactor.

The protein localises to the cell membrane. The catalysed reaction is a 5-methoxy-2-methyl-3-(all-trans-polyprenyl)benzene-1,4-diol + AH2 + O2 = a 3-demethylubiquinol + A + H2O. Its pathway is cofactor biosynthesis; ubiquinone biosynthesis. Its function is as follows. Catalyzes the hydroxylation of 2-nonaprenyl-3-methyl-6-methoxy-1,4-benzoquinol during ubiquinone biosynthesis. This chain is 3-demethoxyubiquinol 3-hydroxylase, found in Xanthomonas campestris pv. campestris (strain 8004).